We begin with the raw amino-acid sequence, 359 residues long: Nicotinate-nucleotide--dimethylbenzimidazole phosphoribosyltransferase (359 aa).

The Proton acceptor role is filled by E318.

The protein belongs to the CobT family. In terms of assembly, homodimer.

It catalyses the reaction 5,6-dimethylbenzimidazole + nicotinate beta-D-ribonucleotide = alpha-ribazole 5'-phosphate + nicotinate + H(+). The protein operates within nucleoside biosynthesis; alpha-ribazole biosynthesis; alpha-ribazole from 5,6-dimethylbenzimidazole: step 1/2. Catalyzes the synthesis of alpha-ribazole-5'-phosphate from nicotinate mononucleotide (NAMN) and 5,6-dimethylbenzimidazole (DMB). In Escherichia coli O8 (strain IAI1), this protein is Nicotinate-nucleotide--dimethylbenzimidazole phosphoribosyltransferase.